The primary structure comprises 375 residues: Chlorophyll a/b light-harvesting protein PcbC (375 aa).

The next 6 helical transmembrane spans lie at 40–60 (LLGAHIAHAGLIAFWAGSITV), 102–122 (YFVIGILHLVTSAVLGAGGLF), 151–171 (LSLILGHHLLLLGILCLAFVA), 225–245 (IIGGHVYIGILELIGGTWHIL), 262–282 (AILSYSLGAVGWMGLLSGFFV), and 300–320 (GAAAVQYILGVLLLVGHVWHA). The interval 352–375 (ARTFIGRGKPQPEPPKKKGLFGRG) is disordered.

Belongs to the PsbB/PsbC family. IsiA/Pcb subfamily. As to quaternary structure, the antenna complex consists of chlorophylls (a and b) and chlorophyll a/b binding proteins. Requires chlorophyll a as cofactor. Chlorophyll b serves as cofactor.

It localises to the cellular thylakoid membrane. Its function is as follows. The antenna complex functions as a light receptor, it captures and delivers excitation energy to photosystems II and I. The Prochlorales pcb genes are not related to higher plant LHCs. In Prochlorothrix hollandica, this protein is Chlorophyll a/b light-harvesting protein PcbC (pcbC).